We begin with the raw amino-acid sequence, 399 residues long: Immunoglobulin heavy constant gamma 1 (399 aa).

Residues 1 to 21 are disordered; sequence ASTKGPSVFPLAPSSKSTSGG. Positions 1-98 are CH1; that stretch reads ASTKGPSVFP…PSNTKVDKKV (98 aa). Residues 1-350 lie on the Extracellular side of the membrane; it reads ASTKGPSVFP…DGELDGLWTT (350 aa). Ig-like domains lie at 6 to 99, 121 to 220, and 229 to 325; these read PSVF…KKVE, PSVF…KTIS, and PQVY…KSLS. A disulfide bridge links Cys-27 with Cys-83. Residues 99 to 110 form a hinge region; sequence EPKSCDKTHTCP. A CH2 region spans residues 111–223; that stretch reads PCPAPELLGG…PIEKTISKAK (113 aa). Cystine bridges form between Cys-144–Cys-204 and Cys-250–Cys-308. The N-linked (GlcNAc...) (complex) asparagine glycan is linked to Asn-180. The CH3 stretch occupies residues 224–330; that stretch reads GQPREPQVYT…QKSLSLSPEL (107 aa). Residues 351-371 form a helical membrane-spanning segment; the sequence is ITIFITLFLLSVCYSATVTFF. Over 372-399 the chain is Cytoplasmic; sequence KVKWIFSSVVDLKQTIIPDYRNMIGQGA.

As to quaternary structure, immunoglobulins are composed of two identical heavy chains and two identical light chains; disulfide-linked. Interacts with FCGR1A; this interaction mediates IgG effector functions on monocytes. Interacts with FCGR2A and FCGR3A. In terms of processing, glycosylation on Asn-180 is required for interaction with Fc receptors and ability to activate the complement pathway. Post-translationally, (Microbial infection) Deglycosylation on Asn-180 by S.pyogenes EndoS or Endos2 endoglucosidases prevents interaction between immunoglobulin-gamma (IgG) and Fc receptors, impairing ability to activate the complement pathway.

It is found in the secreted. It localises to the cell membrane. In terms of biological role, constant region of immunoglobulin heavy chains. Immunoglobulins, also known as antibodies, are membrane-bound or secreted glycoproteins produced by B lymphocytes. In the recognition phase of humoral immunity, the membrane-bound immunoglobulins serve as receptors which, upon binding of a specific antigen, trigger the clonal expansion and differentiation of B lymphocytes into immunoglobulins-secreting plasma cells. Secreted immunoglobulins mediate the effector phase of humoral immunity, which results in the elimination of bound antigens. The antigen binding site is formed by the variable domain of one heavy chain, together with that of its associated light chain. Thus, each immunoglobulin has two antigen binding sites with remarkable affinity for a particular antigen. The variable domains are assembled by a process called V-(D)-J rearrangement and can then be subjected to somatic hypermutations which, after exposure to antigen and selection, allow affinity maturation for a particular antigen. Mediates IgG effector functions on monocytes triggering ADCC of virus-infected cells. This chain is Immunoglobulin heavy constant gamma 1, found in Homo sapiens (Human).